Consider the following 74-residue polypeptide: Conotoxin MiEr93 (74 aa).

The first 22 residues, 1–22, serve as a signal peptide directing secretion; the sequence is MKLTCVLIIAVLFLTAYQLATA. Residues 23–45 constitute a propeptide that is removed on maturation; that stretch reads ASYAKGKQKHRALRPADKHLRLT. 3 cysteine pairs are disulfide-bonded: cysteine 48–cysteine 62, cysteine 55–cysteine 66, and cysteine 61–cysteine 73.

The protein belongs to the conotoxin O1 superfamily. In terms of tissue distribution, expressed by the venom duct.

The protein resides in the secreted. This chain is Conotoxin MiEr93, found in Conus miles (Soldier cone).